The sequence spans 414 residues: Carboxyl-terminal-processing protease (414 aa).

Residues 1–29 form the signal peptide; sequence MLRKRLQAGLCSLLLVLVLVFGPMERAIA. One can recognise a PDZ domain in the interval 100–184; the sequence is YRSLKVSTSG…STVSLTVKSP (85 aa). Catalysis depends on charge relay system residues Ser310, Asp321, and Lys335.

It belongs to the peptidase S41A family.

The protein resides in the cellular thylakoid lumen. The catalysed reaction is The enzyme shows specific recognition of a C-terminal tripeptide, Xaa-Yaa-Zaa, in which Xaa is preferably Ala or Leu, Yaa is preferably Ala or Tyr, and Zaa is preferably Ala, but then cleaves at a variable distance from the C-terminus. A typical cleavage is -Ala-Ala-|-Arg-Ala-Ala-Lys-Glu-Asn-Tyr-Ala-Leu-Ala-Ala.. Its function is as follows. Cleavage of the 16 C-terminal residues from the D1 precursor of photosystem II (PSII). This proteolytic processing is necessary to allow the light-driven assembly of the oxygen-evolving cluster (a tetranuclear manganese), which is responsible for photosynthetic water oxidation. The protein is Carboxyl-terminal-processing protease (ctpA) of Picosynechococcus sp. (strain ATCC 27264 / PCC 7002 / PR-6) (Agmenellum quadruplicatum).